The primary structure comprises 311 residues: tRNA-cytidine(32) 2-sulfurtransferase (311 aa).

Positions 47-52 (SGGKDS) match the PP-loop motif motif. The [4Fe-4S] cluster site is built by Cys-122, Cys-125, and Cys-213.

This sequence belongs to the TtcA family. Homodimer. The cofactor is Mg(2+). It depends on [4Fe-4S] cluster as a cofactor.

It localises to the cytoplasm. The catalysed reaction is cytidine(32) in tRNA + S-sulfanyl-L-cysteinyl-[cysteine desulfurase] + AH2 + ATP = 2-thiocytidine(32) in tRNA + L-cysteinyl-[cysteine desulfurase] + A + AMP + diphosphate + H(+). It participates in tRNA modification. Catalyzes the ATP-dependent 2-thiolation of cytidine in position 32 of tRNA, to form 2-thiocytidine (s(2)C32). The sulfur atoms are provided by the cysteine/cysteine desulfurase (IscS) system. In Escherichia coli O1:K1 / APEC, this protein is tRNA-cytidine(32) 2-sulfurtransferase.